Consider the following 173-residue polypeptide: T-cell receptor beta-1 chain C region (173 aa).

Positions E1–E146 are c region. Residues C31 and C71 are joined by a disulfide bond. N-linked (GlcNAc...) asparagine glycans are attached at residues N67 and N116. A helical transmembrane segment spans residues E146–M167. Residues V168–S173 are Cytoplasmic-facing.

Its subcellular location is the membrane. This is T-cell receptor beta-1 chain C region from Mus musculus (Mouse).